Here is a 206-residue protein sequence, read N- to C-terminus: LexA repressor (206 aa).

The H-T-H motif DNA-binding region spans 28–48 (VREICAAVGLSSTSTVHGHLT). Active-site for autocatalytic cleavage activity residues include S127 and K165.

It belongs to the peptidase S24 family. In terms of assembly, homodimer.

It catalyses the reaction Hydrolysis of Ala-|-Gly bond in repressor LexA.. In terms of biological role, represses a number of genes involved in the response to DNA damage (SOS response), including recA and lexA. In the presence of single-stranded DNA, RecA interacts with LexA causing an autocatalytic cleavage which disrupts the DNA-binding part of LexA, leading to derepression of the SOS regulon and eventually DNA repair. The protein is LexA repressor of Lactobacillus delbrueckii subsp. bulgaricus (strain ATCC 11842 / DSM 20081 / BCRC 10696 / JCM 1002 / NBRC 13953 / NCIMB 11778 / NCTC 12712 / WDCM 00102 / Lb 14).